A 185-amino-acid chain; its full sequence is Elongation factor P (185 aa).

This sequence belongs to the elongation factor P family.

It is found in the cytoplasm. Its pathway is protein biosynthesis; polypeptide chain elongation. In terms of biological role, involved in peptide bond synthesis. Stimulates efficient translation and peptide-bond synthesis on native or reconstituted 70S ribosomes in vitro. Probably functions indirectly by altering the affinity of the ribosome for aminoacyl-tRNA, thus increasing their reactivity as acceptors for peptidyl transferase. In Streptococcus uberis (strain ATCC BAA-854 / 0140J), this protein is Elongation factor P.